Consider the following 359-residue polypeptide: Outer membrane protein assembly factor BamC (359 aa).

Residues 1 to 34 (MASLFDKNSFQMTRLQKTAVAKVVGVSLIMLLAA) form the signal peptide. The N-palmitoyl cysteine moiety is linked to residue cysteine 35. The S-diacylglycerol cysteine moiety is linked to residue cysteine 35.

This sequence belongs to the BamC family. In terms of assembly, part of the Bam complex, which is composed of the outer membrane protein BamA, and four lipoproteins BamB, BamC, BamD and BamE.

It localises to the cell outer membrane. In terms of biological role, part of the outer membrane protein assembly complex, which is involved in assembly and insertion of beta-barrel proteins into the outer membrane. This chain is Outer membrane protein assembly factor BamC, found in Rahnella sp. (strain Y9602).